We begin with the raw amino-acid sequence, 130 residues long: Fluoride-specific ion channel FluC (130 aa).

The next 4 helical transmembrane spans lie at 3–23, 38–58, 67–87, and 102–122; these read FVFL…YFVG, LGTF…GHLA, FGIF…SYGL, and VSYV…GWFL. Na(+) contacts are provided by G77 and T80.

This sequence belongs to the fluoride channel Fluc/FEX (TC 1.A.43) family.

The protein localises to the cell inner membrane. The enzyme catalyses fluoride(in) = fluoride(out). Its activity is regulated as follows. Na(+) is not transported, but it plays an essential structural role and its presence is essential for fluoride channel function. Its function is as follows. Fluoride-specific ion channel. Important for reducing fluoride concentration in the cell, thus reducing its toxicity. This Helicobacter pylori (strain HPAG1) protein is Fluoride-specific ion channel FluC.